A 33-amino-acid chain; its full sequence is Cecropin-B (33 aa).

Lys-21 carries the post-translational modification 5-hydroxylysine.

As to quaternary structure, monomer. Hemolymph.

It is found in the secreted. Its function is as follows. Cecropins have lytic and antibacterial activity against several Gram-positive and Gram-negative bacteria. Also has activity against fungi. This Heliothis virescens (Tobacco budworm moth) protein is Cecropin-B.